We begin with the raw amino-acid sequence, 123 residues long: Large ribosomal subunit protein bL12 (123 aa).

The protein belongs to the bacterial ribosomal protein bL12 family. As to quaternary structure, homodimer. Part of the ribosomal stalk of the 50S ribosomal subunit. Forms a multimeric L10(L12)X complex, where L10 forms an elongated spine to which 2 to 4 L12 dimers bind in a sequential fashion. Binds GTP-bound translation factors.

Forms part of the ribosomal stalk which helps the ribosome interact with GTP-bound translation factors. Is thus essential for accurate translation. The protein is Large ribosomal subunit protein bL12 of Rhodopseudomonas palustris (strain BisB18).